The sequence spans 354 residues: Phosphoribosylformylglycinamidine cyclo-ligase (354 aa).

Belongs to the AIR synthase family.

The protein localises to the cytoplasm. The enzyme catalyses 2-formamido-N(1)-(5-O-phospho-beta-D-ribosyl)acetamidine + ATP = 5-amino-1-(5-phospho-beta-D-ribosyl)imidazole + ADP + phosphate + H(+). Its pathway is purine metabolism; IMP biosynthesis via de novo pathway; 5-amino-1-(5-phospho-D-ribosyl)imidazole from N(2)-formyl-N(1)-(5-phospho-D-ribosyl)glycinamide: step 2/2. The polypeptide is Phosphoribosylformylglycinamidine cyclo-ligase (Marinobacter nauticus (strain ATCC 700491 / DSM 11845 / VT8) (Marinobacter aquaeolei)).